A 76-amino-acid polypeptide reads, in one-letter code: Large ribosomal subunit protein eL20 (76 aa).

This sequence belongs to the eukaryotic ribosomal protein eL20 family. Part of the 50S ribosomal subunit. Binds 23S rRNA.

This chain is Large ribosomal subunit protein eL20, found in Methanococcus maripaludis (strain C6 / ATCC BAA-1332).